The following is a 623-amino-acid chain: DNA polymerase alpha subunit B (623 aa).

The disordered stretch occupies residues 113–151 (IPKIKDEPSSSVDVSTARNKNNHNNNNNNNPSLPNKSMF). Over residues 121-130 (SSSVDVSTAR) the composition is skewed to polar residues.

Belongs to the DNA polymerase alpha subunit B family. As to quaternary structure, DNA polymerase alpha:primase is a four subunit enzyme complex, which is assembled throughout the cell cycle, and consists of the two DNA polymerase subunits A and B, and the DNA primase large and small subunits. Subunit B binds to subunit A.

Its subcellular location is the nucleus. May play an essential role at the early stage of chromosomal DNA replication by coupling the polymerase alpha/primase complex to the cellular replication machinery. The chain is DNA polymerase alpha subunit B (polA2) from Dictyostelium discoideum (Social amoeba).